We begin with the raw amino-acid sequence, 152 residues long: Ribosome maturation factor RimP (152 aa).

The protein belongs to the RimP family.

Its subcellular location is the cytoplasm. Functionally, required for maturation of 30S ribosomal subunits. In Burkholderia orbicola (strain MC0-3), this protein is Ribosome maturation factor RimP.